Reading from the N-terminus, the 969-residue chain is Exoribonuclease II, mitochondrial (969 aa).

The transit peptide at 1–41 directs the protein to the mitochondrion; the sequence is MVVRRKVHVLLIARSFHSYTPCFRVTTRGKRQRSKSKQQAK. The span at 28–38 shows a compositional bias: basic residues; the sequence is RGKRQRSKSKQ. The interval 28-54 is disordered; it reads RGKRQRSKSKQQAKVELDHTRELDNDQ. Over residues 40–51 the composition is skewed to basic and acidic residues; the sequence is AKVELDHTRELD. The RNB domain occupies 522–853; the sequence is RYDFGDLRVF…NHLQIHRHLQ (332 aa).

This sequence belongs to the RNR ribonuclease family. In terms of assembly, MSU1 and SUV3 are the two components of the mitochondrial degradosome (mtEXO).

It localises to the mitochondrion matrix. The enzyme catalyses Exonucleolytic cleavage in the 3'- to 5'-direction to yield nucleoside 5'-phosphates.. Essential for mitochondrial biogenesis. Its function is as follows. Required for intron-independent turnover and processing of mitochondrial RNA. Participates in 3' mtRNA processing where it hydrolyzes single-stranded RNA or partially double-stranded RNA with 3' single-stranded tails. This Saccharomyces cerevisiae (strain ATCC 204508 / S288c) (Baker's yeast) protein is Exoribonuclease II, mitochondrial (DSS1).